A 577-amino-acid chain; its full sequence is Maltase A1 (577 aa).

The signal sequence occupies residues 1 to 19; that stretch reads MRPQSAACLLLAIVGFVGA. N-linked (GlcNAc...) asparagine glycosylation is found at asparagine 119 and asparagine 151. Aspartate 221 serves as the catalytic Nucleophile. Asparagine 244 carries an N-linked (GlcNAc...) asparagine glycan. Glutamate 297 serves as the catalytic Proton donor. N-linked (GlcNAc...) asparagine glycosylation is found at asparagine 315 and asparagine 331.

Belongs to the glycosyl hydrolase 13 family.

The catalysed reaction is Hydrolysis of terminal, non-reducing (1-&gt;4)-linked alpha-D-glucose residues with release of alpha-D-glucose.. This chain is Maltase A1 (Mal-A1), found in Drosophila melanogaster (Fruit fly).